Consider the following 237-residue polypeptide: Dihydroceramide fatty acyl 2-hydroxylase FAH2 (237 aa).

The next 2 helical transmembrane spans lie at 54-74 (VWWA…SISA) and 77-97 (GLTF…WTLL). H102, H107, H123, H126, and H127 together coordinate Zn(2+). Helical transmembrane passes span 134–154 (LRLV…WKLL) and 156–176 (LLAT…GYVM). H181, H185, H201, H204, and H205 together coordinate Zn(2+).

Belongs to the sterol desaturase family. Interacts with CYTB5-A, CYTB5-B, CYTB5-C and CYTB5-D. The cofactor is Zn(2+). In terms of tissue distribution, expressed in leaves, roots, flowers and seeds.

The protein resides in the endoplasmic reticulum membrane. It catalyses the reaction an N-(1,2-saturated acyl)sphinganine + 2 Fe(II)-[cytochrome b5] + O2 + 2 H(+) = an N-[(2'R)-hydroxyacyl]sphinganine + 2 Fe(III)-[cytochrome b5] + H2O. Fatty acid 2-hydroxylase involved in the alpha-hydroxylation of the long-chain fatty acid (LCFA) palmitic acid. Probably involved in the resistance response to oxidative stress. In Arabidopsis thaliana (Mouse-ear cress), this protein is Dihydroceramide fatty acyl 2-hydroxylase FAH2.